The chain runs to 181 residues: RING-H2 finger protein ATL56 (181 aa).

A disordered region spans residues 1 to 24 (MPPTNNYRISGEPPSTTPSHPPPK). A compositionally biased stretch (pro residues) spans 15 to 24 (STTPSHPPPK). The chain crosses the membrane as a helical span at residues 32–52 (LFLVGVIMFSIFFLFLVLIGI). The segment at 110–152 (CVVCFDGFRQGQWCRNLPGCGHVFHRKCVDTWLLKASTCPICR) adopts an RING-type; atypical zinc-finger fold.

It belongs to the RING-type zinc finger family. ATL subfamily.

It is found in the membrane. The enzyme catalyses S-ubiquitinyl-[E2 ubiquitin-conjugating enzyme]-L-cysteine + [acceptor protein]-L-lysine = [E2 ubiquitin-conjugating enzyme]-L-cysteine + N(6)-ubiquitinyl-[acceptor protein]-L-lysine.. It functions in the pathway protein modification; protein ubiquitination. This is RING-H2 finger protein ATL56 (ATL56) from Arabidopsis thaliana (Mouse-ear cress).